The primary structure comprises 517 residues: MSTPPRPLALLILDGWGYSEETASNAIHAAHTPIWDTLWDRYPHTIIRASGAEVGLPNEQMGNSEVGHLNLGSGRVIYQEYTRVNRALRTGSFFTNHTLTEAVDRAVKSDKAIHILGLLSPSGIHCHEDHIHAMVELAIKRRCQEVYLHAFLDGRDTAPKSAQASILAMQAKFTELGKGRFASLIGRYYGMDRDHRWPRIQAAYNLIATGQAEYEAESAKQALAMAYERGETDEFVQATRIVPSGKAPVQVKDGDVIIFMNFRSDRARQITRAFIEPDFTGFERLYWPKLAQFVSLTEYSKEFDIPVAFPSEKPQNTFGQVLAKLGLHQLRIAETEKYAHVTFFFNGGREQPFEGEDRILIPSPQVDTYDQKPEMSAVEVTDNIVKAIESDKYDVIICNYANPDMVGHTGDFNATVKAIETIDQCLGRVWAALQSAGGELIITADHGNAEKMYNAQYQQPHTAHTHNAVPFIFVSERAAIASANGSLADVTPTMLYLMNIKPPPEMSEHRLIELSSP.

Residues Asp14 and Ser64 each contribute to the Mn(2+) site. Residue Ser64 is the Phosphoserine intermediate of the active site. Residues His125, 155–156, Arg187, Arg193, 263–266, and Lys337 each bind substrate; these read RD and RSDR. Residues Asp404, His408, Asp445, His446, and His464 each coordinate Mn(2+).

This sequence belongs to the BPG-independent phosphoglycerate mutase family. In terms of assembly, monomer. Mn(2+) serves as cofactor.

It catalyses the reaction (2R)-2-phosphoglycerate = (2R)-3-phosphoglycerate. It functions in the pathway carbohydrate degradation; glycolysis; pyruvate from D-glyceraldehyde 3-phosphate: step 3/5. Functionally, catalyzes the interconversion of 2-phosphoglycerate and 3-phosphoglycerate. The chain is 2,3-bisphosphoglycerate-independent phosphoglycerate mutase from Nitrosococcus oceani (strain ATCC 19707 / BCRC 17464 / JCM 30415 / NCIMB 11848 / C-107).